Reading from the N-terminus, the 211-residue chain is Claudin-7 (211 aa).

Residues 1-7 are Cytoplasmic-facing; it reads MANSGLQ. The chain crosses the membrane as a helical span at residues 8-28; the sequence is LLGFSMALLGWVGLVACTAIP. The Extracellular portion of the chain corresponds to 29–81; it reads QWQMSSYAGDNIITAQAMYKGLWMDCVTQSTGMMSCKMYDSVLALSAALQATR. Residues 82–102 traverse the membrane as a helical segment; it reads ALMVVSLVLGFLAMFVATMGM. At 103–117 the chain is on the cytoplasmic side; sequence KCTRCGGDDKVKKAR. Residues 118–138 form a helical membrane-spanning segment; it reads IAMGGGIIFIVAGLAALVACS. Topologically, residues 139-160 are extracellular; it reads WYGHQIVTDFYNPLIPTNIKYE. The helical transmembrane segment at 161-181 threads the bilayer; it reads FGPAIFIGWAGSALVILGGAL. Over 182–211 the chain is Cytoplasmic; the sequence is LSCSCPGNESKAGYRVPRSYPKSNSSKEYV. The interactions with TJP1, TJP2 and TJP3 stretch occupies residues 210–211; the sequence is YV.

This sequence belongs to the claudin family. As to quaternary structure, directly interacts with TJP1/ZO-1, TJP2/ZO-2 and TJP3/ZO-3. The phosphorylated form interacts with EPCAM. Does not interact with CD81. Phosphorylated. As to expression, expressed in kidney, lung and prostate. Isoform 1 seems to be predominant, except in some normal prostate samples, where isoform 2 is the major form. Down-regulated in breast cancers, including ductal carcinoma in situ (DCIS), lobular carcinoma in situ (LCIS) and invasive ductal carcinoma (IDC) (at protein level), as well as in several cancer cell lines. Loss of expression correlates with histological grade, occurring predominantly in high-grade lesions.

It localises to the cell membrane. It is found in the basolateral cell membrane. The protein resides in the cell junction. The protein localises to the tight junction. In terms of biological role, plays a major role in tight junction-specific obliteration of the intercellular space. The sequence is that of Claudin-7 (CLDN7) from Homo sapiens (Human).